A 66-amino-acid polypeptide reads, in one-letter code: Protein translocase subunit SecE (66 aa).

The chain crosses the membrane as a helical span at residues 41-61; sequence LAVMFIVGFVGFVIYILMEIL.

Belongs to the SecE/SEC61-gamma family. Component of the Sec protein translocase complex. Heterotrimer consisting of SecY (alpha), SecG (beta) and SecE (gamma) subunits. The heterotrimers can form oligomers, although 1 heterotrimer is thought to be able to translocate proteins. Interacts with the ribosome. May interact with SecDF, and other proteins may be involved.

Its subcellular location is the cell membrane. Functionally, essential subunit of the Sec protein translocation channel SecYEG. Clamps together the 2 halves of SecY. May contact the channel plug during translocation. The protein is Protein translocase subunit SecE of Archaeoglobus fulgidus (strain ATCC 49558 / DSM 4304 / JCM 9628 / NBRC 100126 / VC-16).